The chain runs to 812 residues: Protein let-653 (812 aa).

The first 21 residues, 1–21 (MRHPLISLLLLIAFYSTSSEA), serve as a signal peptide directing secretion. 2 Apple domains span residues 26–116 (CNSF…WKYC) and 123–209 (CSGE…ENNC). Intrachain disulfides connect C26–C116, C53–C88, C57–C72, C123–C209, C154–C178, and C158–C166. 3 N-linked (GlcNAc...) asparagine glycosylation sites follow: N172, N211, and N272. A ZP domain is found at 221–725 (ECRDNGISVS…NTCDDVEGCD (505 aa)). Composition is skewed to low complexity over residues 375-449 (QVTT…STTT) and 496-584 (PTTT…PASS). Disordered stretches follow at residues 375-461 (QVTT…STIM) and 494-584 (DVPT…PASS). N-linked (GlcNAc...) asparagine glycosylation occurs at N771.

Cleaved at the C-terminal domain. As to expression, expressed in external cuticle-producing epithelial cells including the epidermis, vulva, rectum, excretory duct and excretory pore.

The protein resides in the apical cell membrane. It is found in the secreted. Its subcellular location is the extracellular space. Its function is as follows. Required for epithelial tube development and shaping. Involved in the morphogenesis and function of the three unicellular tubes of the excretory system, the canal cell, the duct cell and the pore cell. Also plays a role in cuticle development, alae formation and shaping of the vulval lumen. Required for larval development. The protein is Protein let-653 of Caenorhabditis elegans.